A 362-amino-acid polypeptide reads, in one-letter code: Heat-inducible transcription repressor HrcA (362 aa).

The protein belongs to the HrcA family.

In terms of biological role, negative regulator of class I heat shock genes (grpE-dnaK-dnaJ and groELS operons). Prevents heat-shock induction of these operons. The protein is Heat-inducible transcription repressor HrcA of Rhizobium leguminosarum bv. trifolii (strain WSM2304).